Consider the following 509-residue polypeptide: Probable aspartic-type endopeptidase CTSD (509 aa).

The N-terminal stretch at 1-21 (MQFLWLCLLSAVTLQFTGTLA) is a signal peptide. The Peptidase A1 domain maps to 102 to 408 (YFSEVKVGSE…DFDKNRVGLA (307 aa)). Asp120 is a catalytic residue. N-linked (GlcNAc...) asparagine glycosylation occurs at Asn174. Asp302 is an active-site residue. Asn361 is a glycosylation site (N-linked (GlcNAc...) asparagine). The disordered stretch occupies residues 451–489 (NKAPSGGSPGLPAESGSDSTTNGEATNGATSSPNSSSSV). Residues 466–480 (GSDSTTNGEATNGAT) show a composition bias toward polar residues. N-linked (GlcNAc...) asparagine glycosylation occurs at Asn484. Ser485 carries the GPI-anchor amidated serine lipid modification. A propeptide spans 486–509 (SSSVLTPTWLTLAVFFAIGSSLWS) (removed in mature form).

Belongs to the peptidase A1 family.

It is found in the cell membrane. Probable GPI-anchored aspartic-type endopeptidase which contributes to virulence. The protein is Probable aspartic-type endopeptidase CTSD (CTSD) of Trichophyton verrucosum (strain HKI 0517).